The sequence spans 284 residues: Pantothenate synthetase (284 aa).

30–37 (MGNLHDGH) serves as a coordination point for ATP. The active-site Proton donor is the His37. Gln61 contributes to the (R)-pantoate binding site. Gln61 is a binding site for beta-alanine. Residue 149 to 152 (GEKD) participates in ATP binding. Residue Gln155 coordinates (R)-pantoate. ATP contacts are provided by residues Val178 and 186–189 (LSSR).

Belongs to the pantothenate synthetase family. In terms of assembly, homodimer.

The protein resides in the cytoplasm. The catalysed reaction is (R)-pantoate + beta-alanine + ATP = (R)-pantothenate + AMP + diphosphate + H(+). The protein operates within cofactor biosynthesis; (R)-pantothenate biosynthesis; (R)-pantothenate from (R)-pantoate and beta-alanine: step 1/1. Functionally, catalyzes the condensation of pantoate with beta-alanine in an ATP-dependent reaction via a pantoyl-adenylate intermediate. This chain is Pantothenate synthetase, found in Klebsiella pneumoniae (strain 342).